The following is a 283-amino-acid chain: Gap junction beta-1 protein (283 aa).

Residues 1–22 (MNWTGLYTLLSGVNRHSTAIGR) lie on the Cytoplasmic side of the membrane. The helical transmembrane segment at 23-45 (VWLSVIFIFRIMVLVVAAESVWG) threads the bilayer. Over 46–75 (DEKSSFICNTLQPGCNSVCYDQFFPISHVR) the chain is Extracellular. A helical membrane pass occupies residues 76–95 (LWSLQLILVSTPALLVAMHV). Residues 96–130 (AHQQHIEKKMLRLEGHGDPLHLEEVKRHKVHISGT) are Cytoplasmic-facing. The chain crosses the membrane as a helical span at residues 131–153 (LWWAYVISVVFRLLFEAVFMYVF). At 154–191 (YLLYPGYAMVRLVKCDVYPCPNTVDCFVSRPTEKTVFT) the chain is on the extracellular side. A helical transmembrane segment spans residues 192 to 214 (VFMLAASGICIILNVAEVVYLII). The Cytoplasmic segment spans residues 215 to 283 (RACARRAQRR…AEKSDRCSAC (69 aa)). A phosphoserine mark is found at S233, S258, S266, and S277.

Belongs to the connexin family. Beta-type (group I) subfamily. As to quaternary structure, a connexon is composed of a hexamer of connexins. Interacts with CNST.

The protein resides in the cell membrane. It localises to the cell junction. It is found in the gap junction. In terms of biological role, one gap junction consists of a cluster of closely packed pairs of transmembrane channels, the connexons, through which materials of low MW diffuse from one cell to a neighboring cell. This chain is Gap junction beta-1 protein (GJB1), found in Macaca fascicularis (Crab-eating macaque).